Consider the following 279-residue polypeptide: Protein phosphatase 1 regulatory subunit 3E (279 aa).

Phosphoserine is present on residues serine 16 and serine 33. The interval 28-89 (RSQRPSLEEE…RSPDTRKRVR (62 aa)) is disordered. Residues 51–65 (ARSRAHVPGRGRRAR) are compositionally biased toward basic residues. Phosphoserine is present on serine 66. The PP1-binding motif motif lies at 87-90 (RVRF). The CBM21 domain occupies 154 to 259 (AARLQAQRIC…NNGGRDYALL (106 aa)). Residues 176-198 (GSARVLDLAYEKRVSVRWSADGW) form a glycogen-binding motif region. Residues 248 to 256 (WDNNGGRDY) are substrate-binding motif.

In terms of tissue distribution, expressed in liver and heart, with low levels in skeletal muscle.

Functionally, acts as a glycogen-targeting subunit for PP1. PP1 is involved in glycogen metabolism and contributes to the activation of glycogen synthase leading to an increase in glycogen synthesis. The sequence is that of Protein phosphatase 1 regulatory subunit 3E (Ppp1r3e) from Rattus norvegicus (Rat).